A 250-amino-acid polypeptide reads, in one-letter code: MAETAPLRVQLIAKTEFLAPPDVPWTTDADGGEALVEFAGRACYQSWSKPNPKTATNAGYLRHIIDVGHFAVLEHASVSFYISGISRSCTHELIRHRHFSYSQLSQRYVPEGDSRVVVPPGLEDDPELREILIAAADASRATYTELLTKLEARFADQPNAVLRRKQARQAARAVLPNATETRIVVSGNYRAWRHFIAMRASEHADVEIRRLAIECLRQLVAVAPAVFADFEVTTLADGSEVATSPLATEV.

The 227-residue stretch at 7–233 (LRVQLIAKTE…PAVFADFEVT (227 aa)) folds into the ThyX domain. DUMP-binding positions include 92–95 (ELIR), 103–107 (QLSQR), and R172. Residues 95 to 97 (RHR) and Q103 contribute to the FAD site. The ThyX motif signature appears at 95–105 (RHRHFSYSQLS). Residues 188 to 190 (NYR) and H194 each bind FAD. DUMP is bound at residue R199. Catalysis depends on R199, which acts as the Involved in ionization of N3 of dUMP, leading to its activation.

The protein belongs to the thymidylate synthase ThyX family. Homotetramer. The cofactor is FAD.

The catalysed reaction is dUMP + (6R)-5,10-methylene-5,6,7,8-tetrahydrofolate + NADPH + H(+) = dTMP + (6S)-5,6,7,8-tetrahydrofolate + NADP(+). It functions in the pathway pyrimidine metabolism; dTTP biosynthesis. Its function is as follows. Catalyzes the reductive methylation of 2'-deoxyuridine-5'-monophosphate (dUMP) to 2'-deoxythymidine-5'-monophosphate (dTMP) while utilizing 5,10-methylenetetrahydrofolate (mTHF) as the methyl donor, and NADPH and FADH(2) as the reductant. The chain is Flavin-dependent thymidylate synthase from Mycobacterium marinum (strain ATCC BAA-535 / M).